Here is a 245-residue protein sequence, read N- to C-terminus: RAD51-like protein 1 (245 aa).

As to quaternary structure, interacts with brc-2 and rad-51.

The protein resides in the nucleus. Functionally, has a role in the homologous recombination repair (HRR) of genomic DNA during meiosis. Required for rad-51 recruitment onto ssDNA gaps generated at stalled replication fork barriers. This chain is RAD51-like protein 1 (rfs-1), found in Caenorhabditis elegans.